A 131-amino-acid chain; its full sequence is Anaerobic and virulence modulator AnvM (131 aa).

Functionally, plays an essential role by modulating the expression of hundreds of genes including quorum sensing system genes and oxidative stress resistance genes under both aerobic and anaerobic conditions. The sequence is that of Anaerobic and virulence modulator AnvM from Pseudomonas aeruginosa (strain ATCC 15692 / DSM 22644 / CIP 104116 / JCM 14847 / LMG 12228 / 1C / PRS 101 / PAO1).